Here is a 130-residue protein sequence, read N- to C-terminus: Ribonuclease VapC4 (130 aa).

One can recognise a PINc domain in the interval Leu-7–Ile-130. The Mg(2+) site is built by Asp-9 and Asp-98.

This sequence belongs to the PINc/VapC protein family. Interacts with cognate antitoxin VapB4. Requires Mg(2+) as cofactor.

The protein localises to the secreted. Functionally, toxic component of a type II toxin-antitoxin (TA) system. Probably exerts its toxic effect by binding to mRNA, inhibiting translation. Binds to, recognizes and cleaves ssRNA at ACGC and AC(A/U)GC sequences, usually between the G and C; cleavage is not very efficient, nor is cleavage required to inhibit protein synthesis. Upon expression in situ, in M.smegmatis or E.coli inhibits cell growth and colony formation; in at least E.coli also causes increased levels of cellular RNA. Its toxic effect is neutralized by coexpression with cognate antitoxin VapB4. The chain is Ribonuclease VapC4 from Mycobacterium tuberculosis (strain ATCC 25618 / H37Rv).